We begin with the raw amino-acid sequence, 365 residues long: Flagellar P-ring protein (365 aa).

The signal sequence occupies residues 1 to 19; sequence MIKFLSALILLLVITAAQA.

This sequence belongs to the FlgI family. The basal body constitutes a major portion of the flagellar organelle and consists of four rings (L,P,S, and M) mounted on a central rod.

It localises to the periplasm. The protein resides in the bacterial flagellum basal body. Functionally, assembles around the rod to form the L-ring and probably protects the motor/basal body from shearing forces during rotation. This Escherichia coli O81 (strain ED1a) protein is Flagellar P-ring protein.